We begin with the raw amino-acid sequence, 429 residues long: MPVTIDPRRHSAALFDLDAVVTDTPLDSTVTLVRQLQGIGVGTAVFSTNRNSQGVLTATGLDHLFPVHVDGLASGKVTILVAAANRLMAQPGRCVVVAVDAAGITAARYGGFALVLGLVIGEDQTGHRDTLRNSGADTVVADLGEVIVRTGDRRMSELPDALQTLGLTDDLTARQPAVFFDFDGTLSDIVDDPDSARPVPGATEALQKLATHCPVAILSGRDLADVIKRIGVPGIWYSGSHGFESTAPDGTHHQNDAAEATIPILEQAATQLRDQLGPIPGVMVEHKRFGVAVHYRNVARDRVNEVAVAVRTAGQRNALRVTTGREVIELRPDIDWDKGKTLHWVIDRLHHAGTQVGSASLMPICLGDDITDEDAFDAVRHTDVGGIPIVVRHTEDGNRATAALFTLDSPMHVSEFTERLARQLSDTQR.

Aspartate 181 functions as the Nucleophile in the catalytic mechanism. Mg(2+) contacts are provided by aspartate 181, aspartate 183, and aspartate 368. 181-183 contacts substrate; that stretch reads DFD.

It belongs to the trehalose phosphatase family. Mg(2+) serves as cofactor.

It carries out the reaction alpha,alpha-trehalose 6-phosphate + H2O = alpha,alpha-trehalose + phosphate. The protein operates within glycan biosynthesis; trehalose biosynthesis. In terms of biological role, removes the phosphate from trehalose 6-phosphate to produce free trehalose. The polypeptide is Trehalose-phosphate phosphatase (otsB) (Mycobacterium leprae (strain TN)).